We begin with the raw amino-acid sequence, 291 residues long: UDP-N-acetylenolpyruvoylglucosamine reductase (291 aa).

The region spanning arginine 22 to aspartate 187 is the FAD-binding PCMH-type domain. The active site involves arginine 166. Cysteine 214 (proton donor) is an active-site residue. Glutamate 283 is an active-site residue.

Belongs to the MurB family. The cofactor is FAD.

The protein localises to the cytoplasm. The catalysed reaction is UDP-N-acetyl-alpha-D-muramate + NADP(+) = UDP-N-acetyl-3-O-(1-carboxyvinyl)-alpha-D-glucosamine + NADPH + H(+). The protein operates within cell wall biogenesis; peptidoglycan biosynthesis. Its function is as follows. Cell wall formation. This chain is UDP-N-acetylenolpyruvoylglucosamine reductase, found in Chlamydia trachomatis serovar L2 (strain ATCC VR-902B / DSM 19102 / 434/Bu).